A 350-amino-acid chain; its full sequence is Glycogenin-1 (350 aa).

N-acetylthreonine is present on T2. 4 residues coordinate UDP: L9, T11, N12, and Y15. UDP-alpha-D-glucose-binding residues include L9, T11, N12, and Y15. Residue S44 is modified to Phosphoserine. R77 lines the UDP pocket. 10 residues coordinate UDP-alpha-D-glucose: R77, K86, D102, A103, D104, N133, S134, D160, D163, and Q164. UDP contacts are provided by D102, A103, and D104. D102 serves as a coordination point for Mn(2+). D104 is a binding site for Mn(2+). Y195 is a glycosylation site (O-linked (Glc...) tyrosine). Positions 212, 215, and 218 each coordinate UDP. Residue H212 participates in Mn(2+) binding. UDP-alpha-D-glucose-binding residues include G215 and K218. The segment at 301–333 is interaction with GYS1; the sequence is SHLSLGEIPAMAQPFVSSEERKERWEQGQADYM.

This sequence belongs to the glycosyltransferase 8 family. Glycogenin subfamily. Part of the GYS1-GYG1 complex, a heterooctamer composed of a tetramer of GYS1 and 2 dimers of GYG1, where each GYS1 protomer binds to one GYG1 subunit (via GYG1 C-terminus); the GYS1 tetramer may dissociate from GYG1 dimers to continue glycogen polymerization on its own. May also form a heterooctamer complex with GYS2 (via GYG1 C-terminus). It depends on Mn(2+) as a cofactor. Self-glycosylated by the transfer of glucose residues from UDP-glucose to itself, forming an alpha-1,4-glycan of around 10 residues attached to Tyr-195. In terms of processing, phosphorylated. In terms of tissue distribution, highly expressed in skeletal muscle and heart, with lower levels in brain, lung, kidney and pancreas.

It is found in the cytoplasm. It localises to the nucleus. The catalysed reaction is L-tyrosyl-[glycogenin] + UDP-alpha-D-glucose = alpha-D-glucosyl-L-tyrosyl-[glycogenin] + UDP + H(+). It catalyses the reaction [1,4-alpha-D-glucosyl](n)-L-tyrosyl-[glycogenin] + UDP-alpha-D-glucose = [1,4-alpha-D-glucosyl](n+1)-L-tyrosyl-[glycogenin] + UDP + H(+). It participates in glycan biosynthesis; glycogen biosynthesis. Inhibited by palladium ions. Functionally, glycogenin participates in the glycogen biosynthetic process along with glycogen synthase and glycogen branching enzyme. It catalyzes the formation of a short alpha (1,4)-glucosyl chain covalently attached via a glucose 1-O-tyrosyl linkage to internal tyrosine residues and these chains act as primers for the elongation reaction catalyzed by glycogen synthase. This is Glycogenin-1 from Homo sapiens (Human).